The following is an 877-amino-acid chain: Alanine--tRNA ligase (877 aa).

Histidine 562, histidine 566, cysteine 664, and histidine 668 together coordinate Zn(2+).

This sequence belongs to the class-II aminoacyl-tRNA synthetase family. The cofactor is Zn(2+).

The protein localises to the cytoplasm. It catalyses the reaction tRNA(Ala) + L-alanine + ATP = L-alanyl-tRNA(Ala) + AMP + diphosphate. Its function is as follows. Catalyzes the attachment of alanine to tRNA(Ala) in a two-step reaction: alanine is first activated by ATP to form Ala-AMP and then transferred to the acceptor end of tRNA(Ala). Also edits incorrectly charged Ser-tRNA(Ala) and Gly-tRNA(Ala) via its editing domain. This is Alanine--tRNA ligase from Synechocystis sp. (strain ATCC 27184 / PCC 6803 / Kazusa).